We begin with the raw amino-acid sequence, 166 residues long: Phosphopantetheine adenylyltransferase (166 aa).

Residue serine 11 participates in substrate binding. Residues 11–12 and histidine 19 contribute to the ATP site; that span reads SF. Residues lysine 43, alanine 76, and arginine 90 each coordinate substrate. ATP is bound by residues 91–93, glutamate 101, and 126–132; these read GLR and YRYFSSS.

This sequence belongs to the bacterial CoaD family. As to quaternary structure, homohexamer. The cofactor is Mg(2+).

It is found in the cytoplasm. The enzyme catalyses (R)-4'-phosphopantetheine + ATP + H(+) = 3'-dephospho-CoA + diphosphate. The protein operates within cofactor biosynthesis; coenzyme A biosynthesis; CoA from (R)-pantothenate: step 4/5. Reversibly transfers an adenylyl group from ATP to 4'-phosphopantetheine, yielding dephospho-CoA (dPCoA) and pyrophosphate. This is Phosphopantetheine adenylyltransferase from Streptococcus mutans serotype c (strain ATCC 700610 / UA159).